Consider the following 383-residue polypeptide: Na(+)/H(+) antiporter NhaA (383 aa).

11 consecutive transmembrane segments (helical) span residues 10–30 (LIGG…NNSP), 56–76 (LMHW…GLEI), 91–111 (IITP…IYLS), 121–141 (GWAI…ALLG), 150–170 (LLVI…IAIF), 174–194 (SLSL…IICN), 206–226 (VVLG…ATLA), 254–274 (PWII…ISFS), 289–308 (IIWG…LAVF), 327–347 (GISL…VLAF), and 355–375 (AIKI…YIVL).

This sequence belongs to the NhaA Na(+)/H(+) (TC 2.A.33) antiporter family.

Its subcellular location is the cell inner membrane. The enzyme catalyses Na(+)(in) + 2 H(+)(out) = Na(+)(out) + 2 H(+)(in). Na(+)/H(+) antiporter that extrudes sodium in exchange for external protons. This is Na(+)/H(+) antiporter NhaA from Francisella tularensis subsp. mediasiatica (strain FSC147).